Reading from the N-terminus, the 63-residue chain is Cecropin-2 (63 aa).

An N-terminal signal peptide occupies residues 1-21 (MNFNKVLVLLAVIFAVFAGQT). Residues 22-23 (EA) constitute a propeptide that is removed on maturation. A Lysine amide modification is found at K62.

It belongs to the cecropin family.

It localises to the secreted. Its function is as follows. Cecropins have lytic and antibacterial activity against several Gram-positive and Gram-negative bacteria. The polypeptide is Cecropin-2 (CEC2) (Ceratitis capitata (Mediterranean fruit fly)).